The following is an 82-amino-acid chain: uncharacterized protein (82 aa).

The protein resides in the plastid. The protein localises to the chloroplast. This is an uncharacterized protein from Vicia faba (Broad bean).